Consider the following 90-residue polypeptide: Sec-independent protein translocase protein TatA (90 aa).

Residues 2–22 form a helical membrane-spanning segment; sequence GVGGISIWQLLIVLVIILLLF. Basic and acidic residues-rich tracts occupy residues 45–68 and 76–90; these read LRDE…HKAE and ADAD…DEHK. The segment at 45–90 is disordered; it reads LRDEERRDAEEAATIEHKQAHKAENPSQRQQADADFKIKSGNDEHK.

The protein belongs to the TatA/E family. The Tat system comprises two distinct complexes: a TatABC complex, containing multiple copies of TatA, TatB and TatC subunits, and a separate TatA complex, containing only TatA subunits. Substrates initially bind to the TatABC complex, which probably triggers association of the separate TatA complex to form the active translocon.

The protein localises to the cell inner membrane. Functionally, part of the twin-arginine translocation (Tat) system that transports large folded proteins containing a characteristic twin-arginine motif in their signal peptide across membranes. TatA could form the protein-conducting channel of the Tat system. This chain is Sec-independent protein translocase protein TatA, found in Nitrosococcus oceani (strain ATCC 19707 / BCRC 17464 / JCM 30415 / NCIMB 11848 / C-107).